The sequence spans 510 residues: Inositol-3-phosphate synthase (510 aa).

Residues Gly-70, Gly-71, Asn-72, Asn-73, Asp-143, Ile-180, Gln-190, Arg-193, Thr-230, Ala-231, Asn-232, Thr-233, Gly-281, Ser-282, Asp-306, Ser-309, Asn-340, Asn-341, Asp-342, Lys-355, Gly-393, Asp-394, Asp-422, and Ser-423 each contribute to the NAD(+) site.

It belongs to the myo-inositol 1-phosphate synthase family. Requires NAD(+) as cofactor.

It localises to the cytoplasm. The protein localises to the cytosol. It is found in the nucleus. The catalysed reaction is D-glucose 6-phosphate = 1D-myo-inositol 3-phosphate. It participates in polyol metabolism; myo-inositol biosynthesis; myo-inositol from D-glucose 6-phosphate: step 1/2. Key enzyme in myo-inositol biosynthesis pathway that catalyzes the conversion of glucose 6-phosphate to 1-myo-inositol 1-phosphate in a NAD-dependent manner. This Hordeum vulgare (Barley) protein is Inositol-3-phosphate synthase.